Consider the following 36-residue polypeptide: uncharacterized protein (36 aa).

Residues 1–14 (MNQLGSGPTKQGVA) show a composition bias toward polar residues. The disordered stretch occupies residues 1 to 36 (MNQLGSGPTKQGVATNTGSTGTTKNNSNLSGKGWVL). Positions 15–36 (TNTGSTGTTKNNSNLSGKGWVL) are enriched in low complexity.

This is an uncharacterized protein from Dictyostelium discoideum (Social amoeba).